The primary structure comprises 518 residues: Gypsy retrotransposon integrase-like protein 1 (518 aa).

Positions 130–292 (QQHLPMVGNP…TPYFQMFNRN (163 aa)) constitute an Integrase catalytic domain. Position 498 is a phosphoserine (S498).

In Mus musculus (Mouse), this protein is Gypsy retrotransposon integrase-like protein 1 (Gin1).